A 908-amino-acid polypeptide reads, in one-letter code: Protein translocase subunit SecA (908 aa).

ATP is bound by residues Gln-90, 108 to 112, and Asp-503; that span reads GEGKT. The span at 846–864 shows a compositional bias: low complexity; that stretch reads AAAAEAPVAPAPQPAAAAP. Residues 846–884 are disordered; sequence AAAAEAPVAPAPQPAAAAPQPTPELVGAEAGEPDPAAWG. Zn(2+) contacts are provided by Cys-892, Cys-894, Cys-903, and His-904.

This sequence belongs to the SecA family. In terms of assembly, monomer and homodimer. Part of the essential Sec protein translocation apparatus which comprises SecA, SecYEG and auxiliary proteins SecDF-YajC and YidC. Zn(2+) serves as cofactor.

The protein resides in the cell inner membrane. The protein localises to the cytoplasm. It carries out the reaction ATP + H2O + cellular proteinSide 1 = ADP + phosphate + cellular proteinSide 2.. Functionally, part of the Sec protein translocase complex. Interacts with the SecYEG preprotein conducting channel. Has a central role in coupling the hydrolysis of ATP to the transfer of proteins into and across the cell membrane, serving both as a receptor for the preprotein-SecB complex and as an ATP-driven molecular motor driving the stepwise translocation of polypeptide chains across the membrane. The chain is Protein translocase subunit SecA from Cereibacter sphaeroides (strain ATCC 17029 / ATH 2.4.9) (Rhodobacter sphaeroides).